Reading from the N-terminus, the 601-residue chain is Amino-acid acetyltransferase, mitochondrial (601 aa).

One can recognise an N-acetyltransferase domain in the interval 401–558; that stretch reads FTMDNLIASK…KKKQNNKKKK (158 aa).

This sequence belongs to the acetyltransferase family.

It is found in the mitochondrion. It catalyses the reaction L-glutamate + acetyl-CoA = N-acetyl-L-glutamate + CoA + H(+). It participates in amino-acid biosynthesis; L-arginine biosynthesis; N(2)-acetyl-L-ornithine from L-glutamate: step 1/4. Functionally, N-acetylglutamate synthase involved in arginine biosynthesis. The polypeptide is Amino-acid acetyltransferase, mitochondrial (ARG2) (Lodderomyces elongisporus (strain ATCC 11503 / CBS 2605 / JCM 1781 / NBRC 1676 / NRRL YB-4239) (Yeast)).